The chain runs to 1452 residues: Pleiotropic drug resistance protein 1 (1452 aa).

Residues 152–425 form the ABC transporter 1 domain; the sequence is LNYLHILPNR…FEYMGFICPE (274 aa). 185–192 provides a ligand contact to ATP; sequence GPPSSGKT. The ABC transmembrane type-2 1 domain occupies 504–716; sequence LLKACTAREY…AQNAIAVNEF (213 aa). A run of 7 helical transmembrane segments spans residues 521-541, 554-574, 609-629, 640-660, 664-684, 694-714, and 753-773; these read FVYI…MTLF, GAVF…NGFS, IPIT…VIGF, LLLL…MGAL, IIVA…MGGF, WWIW…IAVN, and IGAG…AVAL. A disordered region spans residues 808 to 830; it reads LGKSSSEKGNDVRRSASSRSMSS. Residues 812–821 are compositionally biased toward basic and acidic residues; that stretch reads SSEKGNDVRR. Residues 855–1107 form the ABC transporter 2 domain; sequence ITFDDIRYAV…HLIKYFEGID (253 aa). An ATP-binding site is contributed by 900–907; sequence GVSGAGKT. Residues 1180-1394 enclose the ABC transmembrane type-2 2 domain; that stretch reads TQCMACFWKQ…TLYGLIASQF (215 aa). Helical transmembrane passes span 1199 to 1219, 1239 to 1259, 1287 to 1307, 1314 to 1334, 1344 to 1364, 1375 to 1395, and 1421 to 1441; these read YTAV…TIFW, YIAV…VIAI, LPYL…MIGF, FFWY…YGMM, IAAI…GFIV, WYYY…SQFG, and FVGY…FIFA.

The protein belongs to the ABC transporter superfamily. ABCG family. PDR (TC 3.A.1.205) subfamily. Expressed in root hypodermal passage cells. Expressed in stem tissues, particularly the vasculature and nodes adjacent to leaf axils.

It is found in the cell membrane. Cellular strigolactone (SL) transporter required for the exudation of SL from the root to the soil. The presence of SL in the vicinity of the roots is required for development of symbiotic interactions with arbuscular mycorrhizal fungi (AMF). Transports SL in the above ground tissues and is required for the control of shoot branching. SL regulates plant shoot architecture by inhibiting the outgrowth of axillary buds. Involved in the regulation of shootward and outward directional strigolactone transport in roots. Due to its polar localization in root cells, mediates directional shootward strigolactone transport, as well as localized outward directional transport for exudation to the soil. The chain is Pleiotropic drug resistance protein 1 from Petunia axillaris (Large white petunia).